The following is a 310-amino-acid chain: Glutaminase 1 (310 aa).

Residues serine 66, asparagine 117, glutamate 161, asparagine 168, tyrosine 192, tyrosine 244, and valine 262 each coordinate substrate. Position 294 is an N6-acetyllysine (lysine 294).

This sequence belongs to the glutaminase family. Homotetramer.

It carries out the reaction L-glutamine + H2O = L-glutamate + NH4(+). The protein is Glutaminase 1 of Escherichia coli O157:H7.